Reading from the N-terminus, the 132-residue chain is ATP synthase epsilon chain (132 aa).

The protein belongs to the ATPase epsilon chain family. F-type ATPases have 2 components, CF(1) - the catalytic core - and CF(0) - the membrane proton channel. CF(1) has five subunits: alpha(3), beta(3), gamma(1), delta(1), epsilon(1). CF(0) has three main subunits: a, b and c.

It is found in the cell inner membrane. Produces ATP from ADP in the presence of a proton gradient across the membrane. This chain is ATP synthase epsilon chain, found in Cereibacter sphaeroides (strain ATCC 17025 / ATH 2.4.3) (Rhodobacter sphaeroides).